A 238-amino-acid chain; its full sequence is tRNA1(Val) (adenine(37)-N6)-methyltransferase (238 aa).

It belongs to the methyltransferase superfamily. tRNA (adenine-N(6)-)-methyltransferase family.

The protein resides in the cytoplasm. The enzyme catalyses adenosine(37) in tRNA1(Val) + S-adenosyl-L-methionine = N(6)-methyladenosine(37) in tRNA1(Val) + S-adenosyl-L-homocysteine + H(+). Its function is as follows. Specifically methylates the adenine in position 37 of tRNA(1)(Val) (anticodon cmo5UAC). This chain is tRNA1(Val) (adenine(37)-N6)-methyltransferase, found in Shewanella baltica (strain OS195).